We begin with the raw amino-acid sequence, 228 residues long: Protein GlxC (228 aa).

The protein belongs to the FwdC/FmdC family.

This chain is Protein GlxC (glxC), found in Rhizobium meliloti (strain 1021) (Ensifer meliloti).